We begin with the raw amino-acid sequence, 413 residues long: Prophage integrase IntA (413 aa).

Residues 105-186 (NTFLLVAERW…RINEVMIYAQ (82 aa)) enclose the Core-binding (CB) domain. The Tyr recombinase domain maps to 209 to 386 (KNMPSIRPDQ…DYLEQRRPMM (178 aa)). Active-site residues include Arg-248, Lys-275, His-337, Arg-340, and His-363. Tyr-373 functions as the O-(3'-phospho-DNA)-tyrosine intermediate in the catalytic mechanism.

The protein belongs to the 'phage' integrase family.

Its function is as follows. Integrase is necessary for integration of the phage into the host genome by site-specific recombination. In conjunction with excisionase, integrase is also necessary for excision of the prophage from the host genome. Part of the cryptic P4-like prophage CP4-57, it excises the prophage when overexpressed, which also requires integration host factor (encoded by ihfA and ihfB). Overexpression of AlpA leads to excision of the CP4-57 prophage, which inactivates ssrA (the gene upstream of the prophage) that encodes tmRNA which is required to rescue stalled ribosomes in a process known as trans-translation. The protein is Prophage integrase IntA (intA) of Escherichia coli (strain K12).